The chain runs to 427 residues: Inward rectifier potassium channel 2 (427 aa).

Topologically, residues 1–81 (MGSVRTNRYS…IFTTCVDIRW (81 aa)) are cytoplasmic. Residue cysteine 76 is modified to S-nitrosocysteine. A helical membrane pass occupies residues 82-106 (RWMLVIFCLAFVLSWLFFGCVFWLI). The Extracellular segment spans residues 107–128 (ALLHGDLDASKESKACVSEVNS). Residues 129–140 (FTAAFLFSIETQ) constitute an intramembrane region (helical; Pore-forming). The pore-forming intramembrane region spans 141–147 (TTIGYGF). Residues 142–147 (TIGYGF) carry the Selectivity filter motif. The Extracellular segment spans residues 148–156 (RCVTDECPV). Residues 157 to 178 (AVFMVVFQSIVGCIIDAFIIGA) form a helical membrane-spanning segment. Topologically, residues 179-427 (VMAKMAKPKK…PRPLRRESEI (249 aa)) are cytoplasmic. Residues 181–208 (AKMAKPKKRNETLVFSHNAVIAMRDGKL) form a polyphosphoinositide (PIP2)-binding region. Positions 384–427 (SKEEDDSENGVPESTSTDTPPDIDLHNQASVPLEPRPLRRESEI) are disordered. The short motif at 425-427 (SEI) is the PDZ-binding element.

It belongs to the inward rectifier-type potassium channel (TC 1.A.2.1) family. KCNJ2 subfamily. As to quaternary structure, homotetramer. Homomultimeric and heteromultimeric association with KCNJ4/Kir2.3. Can form heteromeric channels with Kir2.6/KCNJ18. Associates, via its PDZ-recognition domain, with a complex containing LIN7A, LIN7B, LIN7C, DLG1, CASK and APBA1. Post-translationally, S-nitrosylation increases the open probability and inward rectifying currents.

The protein resides in the cell membrane. The protein localises to the sarcolemma. Its subcellular location is the T-tubule. It catalyses the reaction K(+)(in) = K(+)(out). Activated by phosphatidylinositol 4,5 biphosphate (PtdIns(4,5)P2). Inward rectifier potassium channels are characterized by a greater tendency to allow potassium to flow into the cell rather than out of it. Their voltage dependence is regulated by the concentration of extracellular potassium; as external potassium is raised, the voltage range of the channel opening shifts to more positive voltages. The inward rectification is mainly due to the blockage of outward current by internal magnesium. Can be blocked by extracellular barium and cesium. Probably participates in establishing action potential waveform and excitability of neuronal and muscle tissues. This is Inward rectifier potassium channel 2 (KCNJ2) from Bos taurus (Bovine).